Consider the following 306-residue polypeptide: UDP-3-O-acyl-N-acetylglucosamine deacetylase (306 aa).

Zn(2+)-binding residues include His81, His241, and Asp245. The Proton donor role is filled by His268.

The protein belongs to the LpxC family. It depends on Zn(2+) as a cofactor.

The catalysed reaction is a UDP-3-O-[(3R)-3-hydroxyacyl]-N-acetyl-alpha-D-glucosamine + H2O = a UDP-3-O-[(3R)-3-hydroxyacyl]-alpha-D-glucosamine + acetate. Its pathway is glycolipid biosynthesis; lipid IV(A) biosynthesis; lipid IV(A) from (3R)-3-hydroxytetradecanoyl-[acyl-carrier-protein] and UDP-N-acetyl-alpha-D-glucosamine: step 2/6. Catalyzes the hydrolysis of UDP-3-O-myristoyl-N-acetylglucosamine to form UDP-3-O-myristoylglucosamine and acetate, the committed step in lipid A biosynthesis. The protein is UDP-3-O-acyl-N-acetylglucosamine deacetylase of Hydrogenovibrio crunogenus (strain DSM 25203 / XCL-2) (Thiomicrospira crunogena).